A 543-amino-acid chain; its full sequence is Glucose transporter HT1 (543 aa).

The interval 1–24 (MPEYPTEDTNASGKTSGSSPDDHT) is disordered. The Cytoplasmic portion of the chain corresponds to 1 to 38 (MPEYPTEDTNASGKTSGSSPDDHTDDNAPSFFSCENLC). The segment covering 7–19 (EDTNASGKTSGSS) has biased composition (polar residues). A helical membrane pass occupies residues 39 to 59 (IVQVPVSTGSLNGFSIGFVAV). The Extracellular segment spans residues 60-120 (YMHLYEIFSG…GSGYNSLESG (61 aa)). N90 and N91 each carry an N-linked (GlcNAc...) asparagine glycan. A helical membrane pass occupies residues 121–141 (LFACSMIVGSMIGSIFAGKFL). The Cytoplasmic segment spans residues 142-147 (SKFGLK). A helical membrane pass occupies residues 148–168 (MSFIVSGVLGIVGSALIHVAT). The Extracellular segment spans residues 169–172 (RGST). Residues 173 to 193 (LWVMCVGRFLMGLVLGLVCVA) form a helical membrane-spanning segment. The Cytoplasmic portion of the chain corresponds to 194-212 (SPMYVNENAHPKYRKTIGV). The helical transmembrane segment at 213 to 233 (LFQVFTTFGIMFAALLGLAIV) threads the bilayer. The Extracellular portion of the chain corresponds to 234-248 (KTPGHDKASGLLWRM). A helical transmembrane segment spans residues 249-269 (QVFCSVSTALSALLLVLGLVV). Topologically, residues 270–300 (RKSKTSFAGGVDSAGEGVLDPNEYSVRQMLG) are cytoplasmic. The helical transmembrane segment at 301–321 (PLAVGAVTAGTLQLTGINAVM) threads the bilayer. At 322-337 (NYAPEIMRNIGMDPME) the chain is on the extracellular side. The chain crosses the membrane as a helical span at residues 338-358 (GNSAVMSWNFVTALVAIPLVS). The Cytoplasmic portion of the chain corresponds to 359 to 364 (RFTMRQ). A helical membrane pass occupies residues 365–385 (LFLACSFMASCACLIMCGIPV). Topologically, residues 386–400 (YPGVASVDNRNIVAT) are extracellular. The helical transmembrane segment at 401-421 (VGIAVFIAAFEFGVGSCFFVL) threads the bilayer. The Cytoplasmic segment spans residues 422 to 436 (AQDLFPRSFRPTGSS). Residues 437–457 (FVVMAQFIFNIMINLLYPITV) form a helical membrane-spanning segment. The Extracellular segment spans residues 458-470 (EAISGGKGKSPEK). A helical membrane pass occupies residues 471–491 (GQSVSFIIFGIIGIICFVLQL). Residues 492–543 (RYLTPWEDGQGTSTSPTARCNAPTSPNNGEGEPATADMSPVEMSTPKHSGAA) lie on the Cytoplasmic side of the membrane. Positions 503–519 (TSTSPTARCNAPTSPNN) are enriched in polar residues. The segment at 503 to 543 (TSTSPTARCNAPTSPNNGEGEPATADMSPVEMSTPKHSGAA) is disordered.

It belongs to the major facilitator superfamily. Sugar transporter (TC 2.A.1.1) family.

The protein resides in the membrane. Functionally, facilitative glucose transporter. Binds D-fructose and cytochalasin-B, but not D-galactose. The sequence is that of Glucose transporter HT1 (HT1) from Trypanosoma vivax (Duttonella vivax).